The sequence spans 172 residues: MIDGDGYRLNVGIVICNNHGQVFWAKRYGQHSWQFPQGGIDEGETPEQAMYRELYEEVGLTKKDVKIVATSRHWLRYKLPKRLVRWDSKPVCIGQKQKWFLLRLDCDESHINMQRGSTPEFDGWRWVSYWYPVRQVVSFKRDVYRRAMKEFASLAMPFKERKTKGKRKLRRG.

In terms of domain architecture, Nudix hydrolase spans 6–149 (GYRLNVGIVI…KRDVYRRAMK (144 aa)). A Nudix box motif is present at residues 38–59 (GGIDEGETPEQAMYRELYEEVG).

It belongs to the Nudix hydrolase family. RppH subfamily. Requires a divalent metal cation as cofactor.

In terms of biological role, accelerates the degradation of transcripts by removing pyrophosphate from the 5'-end of triphosphorylated RNA, leading to a more labile monophosphorylated state that can stimulate subsequent ribonuclease cleavage. The sequence is that of RNA pyrophosphohydrolase from Vibrio atlanticus (strain LGP32) (Vibrio splendidus (strain Mel32)).